A 430-amino-acid polypeptide reads, in one-letter code: Adenylosuccinate synthetase (430 aa).

Residues 13–19 and 41–43 contribute to the GTP site; these read GDEGKGK and GHT. The active-site Proton acceptor is aspartate 14. Mg(2+) contacts are provided by aspartate 14 and glycine 41. Residues 14–17, 39–42, threonine 130, arginine 144, glutamine 225, threonine 240, and arginine 304 each bind IMP; these read DEGK and NAGH. Histidine 42 (proton donor) is an active-site residue. Position 300–306 (300–306) interacts with substrate; that stretch reads ASTGRPR. Residues arginine 306, 332–334, and 414–416 contribute to the GTP site; these read KLD and STG.

The protein belongs to the adenylosuccinate synthetase family. Homodimer. Mg(2+) is required as a cofactor.

It is found in the cytoplasm. It catalyses the reaction IMP + L-aspartate + GTP = N(6)-(1,2-dicarboxyethyl)-AMP + GDP + phosphate + 2 H(+). The protein operates within purine metabolism; AMP biosynthesis via de novo pathway; AMP from IMP: step 1/2. Plays an important role in the de novo pathway of purine nucleotide biosynthesis. Catalyzes the first committed step in the biosynthesis of AMP from IMP. This chain is Adenylosuccinate synthetase, found in Xylella fastidiosa (strain 9a5c).